A 393-amino-acid polypeptide reads, in one-letter code: Pyrimidine monooxygenase RutA (393 aa).

FMN is bound by residues 79-80 (IK), Asn145, Glu154, 170-171 (RY), and Ser220.

It belongs to the NtaA/SnaA/DszA monooxygenase family. RutA subfamily.

The enzyme catalyses uracil + FMNH2 + NADH + O2 = (Z)-3-ureidoacrylate + FMN + NAD(+) + H2O + H(+). It catalyses the reaction thymine + FMNH2 + NADH + O2 = (Z)-2-methylureidoacrylate + FMN + NAD(+) + H2O + H(+). Catalyzes the pyrimidine ring opening between N-3 and C-4 by an unusual flavin hydroperoxide-catalyzed mechanism, adding oxygen atoms in the process to yield ureidoacrylate peracid, that immediately reacts with FMN forming ureidoacrylate and FMN-N(5)-oxide. The FMN-N(5)-oxide reacts spontaneously with NADH to produce FMN. Requires the flavin reductase RutF to regenerate FMN in vivo. This is Pyrimidine monooxygenase RutA from Escherichia coli O6:H1 (strain CFT073 / ATCC 700928 / UPEC).